The sequence spans 146 residues: Large ribosomal subunit protein bL21 (146 aa).

A disordered region spans residues 115–146 (KSISLGKSAPKSSAKKETVKKETKPKSEKSTN). Positions 128 to 146 (AKKETVKKETKPKSEKSTN) are enriched in basic and acidic residues.

This sequence belongs to the bacterial ribosomal protein bL21 family. Part of the 50S ribosomal subunit. Contacts protein L20.

This protein binds to 23S rRNA in the presence of protein L20. In Prochlorococcus marinus (strain MIT 9312), this protein is Large ribosomal subunit protein bL21.